The following is a 445-amino-acid chain: Probable carboxypeptidase UREG_07869 (445 aa).

A signal peptide spans methionine 1 to cysteine 17. Position 165 (aspartate 165) interacts with Zn(2+). The active-site Proton acceptor is the glutamate 197. Glutamate 198 is a binding site for Zn(2+).

Belongs to the peptidase M20A family. Requires Zn(2+) as cofactor.

The protein resides in the secreted. This chain is Probable carboxypeptidase UREG_07869, found in Uncinocarpus reesii (strain UAMH 1704).